A 442-amino-acid chain; its full sequence is Histidine--tRNA ligase (442 aa).

This sequence belongs to the class-II aminoacyl-tRNA synthetase family. Homodimer.

The protein resides in the cytoplasm. The catalysed reaction is tRNA(His) + L-histidine + ATP = L-histidyl-tRNA(His) + AMP + diphosphate + H(+). The protein is Histidine--tRNA ligase of Psychrobacter arcticus (strain DSM 17307 / VKM B-2377 / 273-4).